A 132-amino-acid chain; its full sequence is uncharacterized protein (132 aa).

The first 19 residues, 1–19 (MKKALFLVGLVFTAGVISS), serve as a signal peptide directing secretion. Cys20 carries N-palmitoyl cysteine lipidation. The S-diacylglycerol cysteine moiety is linked to residue Cys20.

It localises to the cell membrane. This is an uncharacterized protein from Aquifex aeolicus (strain VF5).